Reading from the N-terminus, the 837-residue chain is Histone acetyltransferase KAT2A (837 aa).

The segment at methionine 1–arginine 99 is disordered. Residue alanine 2 is modified to N-acetylalanine. Residues alanine 7 to alanine 51 are compositionally biased toward pro residues. Residues threonine 58–glycine 74 are compositionally biased toward gly residues. Residues aspartate 75–alanine 87 are compositionally biased toward low complexity. Residues serine 88 to arginine 99 show a composition bias toward basic residues. The residue at position 307 (serine 307) is a Phosphoserine. Residues phenylalanine 407 to arginine 434 form a disordered region. Residues asparagine 416 to glycine 425 are compositionally biased toward low complexity. Residues valine 503–asparagine 656 enclose the N-acetyltransferase domain. Residue lysine 549 is modified to N6-acetyllysine. Catalysis depends on glutamate 575, which acts as the Proton donor/acceptor. Residues cysteine 579–valine 581, glutamine 586–threonine 592, and tyrosine 617 each bind acetyl-CoA. Succinyl-CoA is bound by residues cysteine 579–valine 581, glutamine 586–threonine 592, and tyrosine 617. Residues leucine 639–alanine 648 form a loop 3 region. A Glycyl lysine isopeptide (Lys-Gly) (interchain with G-Cter in SUMO2) cross-link involves residue lysine 728. Positions lysine 728–glycine 832 constitute a Bromo domain. Position 735 is a phosphothreonine (threonine 735). Residues lysine 759 and lysine 791 each participate in a glycyl lysine isopeptide (Lys-Gly) (interchain with G-Cter in SUMO2) cross-link.

The protein belongs to the acetyltransferase family. GCN5 subfamily. As to quaternary structure, homooligomer; may form a tetramer of homodimers. Interacts with EP300, CREBBP and ADA2. Component of the TFTC-HAT complex, at least composed of TAF5L, TAF6L, TAF3, TADA3L, SUPT3H/SPT3, TAF2/TAFII150, TAF4/TAFII135, TAF5/TAFII100, KAT2A/GCN5L2, TAF10 and TRRAP. Component of the STAGA transcription coactivator-HAT complex, at least composed of SUPT3H, KAT2A, SUPT7L, TAF5L, TAF6L, TADA3L, TAD1L, TAF10, TAF12, TRRAP and TAF9. The STAGA core complex is associated with a subcomplex required for histone deubiquitination composed of ATXN7L3, ENY2 and USP22. Component of the ADA2A-containing complex (ATAC), composed of KAT14, KAT2A, TADA2L, TADA3L, ZZ3, MBIP, WDR5, YEATS2, CCDC101 and DR1. In the complex, it probably interacts directly with KAT14, MBIP and WDR5. Interacts with PML. Interacts with CEBPB. Interacts with TACC1, TACC2 and TACC3. Interacts with RELA. Interacts with NFATC2. Interacts with TBX5. Interacts with PLK4. Associates with the 2-oxoglutarate dehydrogenase complex. Interacts with XPC; leading to KAT2A recruitment to promoters and subsequent acetylation of histones. Interacts with ERCC3/XPB; leading to KAT2A recruitment to promoters and subsequent acetylation of histones. Interacts with ISL1. Interactions of ISL1 with MLIP1 or KAT2A may be mutually exclusive. (Microbial infection) Interacts with and acetylates HIV-1 Tat. In terms of processing, acetylated at Lys-549, inhibiting the protein acetyltransferase activity. Deacetylation at Lys-549 by SIRT6 promotes phosphorylation at Ser-307 and Thr-735 and subsequent activation of the protein acetyltransferase activity, leading to acetylation and inactivation of PPARGC1A. As to expression, expressed in all tissues tested.

It localises to the nucleus. The protein resides in the chromosome. The protein localises to the cytoplasm. Its subcellular location is the cytoskeleton. It is found in the microtubule organizing center. It localises to the centrosome. The enzyme catalyses L-lysyl-[histone] + acetyl-CoA = N(6)-acetyl-L-lysyl-[histone] + CoA + H(+). It carries out the reaction L-lysyl-[protein] + acetyl-CoA = N(6)-acetyl-L-lysyl-[protein] + CoA + H(+). The catalysed reaction is succinyl-CoA + L-lysyl-[protein] = N(6)-succinyl-L-lysyl-[protein] + CoA + H(+). It catalyses the reaction glutaryl-CoA + L-lysyl-[protein] = N(6)-glutaryl-L-lysyl-[protein] + CoA + H(+). In terms of biological role, protein lysine acyltransferase that can act as a acetyltransferase, glutaryltransferase, succinyltransferase or malonyltransferase, depending on the context. Acts as a histone lysine succinyltransferase: catalyzes succinylation of histone H3 on 'Lys-79' (H3K79succ), with a maximum frequency around the transcription start sites of genes. Succinylation of histones gives a specific tag for epigenetic transcription activation. Association with the 2-oxoglutarate dehydrogenase complex, which provides succinyl-CoA, is required for histone succinylation. In different complexes, functions either as an acetyltransferase (HAT) or as a succinyltransferase: in the SAGA and ATAC complexes, acts as a histone acetyltransferase. Has significant histone acetyltransferase activity with core histones, but not with nucleosome core particles. Has a a strong preference for acetylation of H3 at 'Lys-9' (H3K9ac). Acetylation of histones gives a specific tag for epigenetic transcription activation. Recruited by the XPC complex at promoters, where it specifically mediates acetylation of histone variant H2A.Z.1/H2A.Z, thereby promoting expression of target genes. Involved in long-term memory consolidation and synaptic plasticity: acts by promoting expression of a hippocampal gene expression network linked to neuroactive receptor signaling. Acts as a positive regulator of T-cell activation: upon TCR stimulation, recruited to the IL2 promoter following interaction with NFATC2 and catalyzes acetylation of histone H3 at 'Lys-9' (H3K9ac), leading to promote IL2 expression. Required for growth and differentiation of craniofacial cartilage and bone by regulating acetylation of histone H3 at 'Lys-9' (H3K9ac). Regulates embryonic stem cell (ESC) pluripotency and differentiation. Also acetylates non-histone proteins, such as CEBPB, MRE11, PPARGC1A, PLK4 and TBX5. Involved in heart and limb development by mediating acetylation of TBX5, acetylation regulating nucleocytoplasmic shuttling of TBX5. Acts as a negative regulator of centrosome amplification by mediating acetylation of PLK4. Acts as a negative regulator of gluconeogenesis by mediating acetylation and subsequent inactivation of PPARGC1A. Also acts as a histone glutaryltransferase: catalyzes glutarylation of histone H4 on 'Lys-91' (H4K91glu), a mark that destabilizes nucleosomes by promoting dissociation of the H2A-H2B dimers from nucleosomes. Functionally, (Microbial infection) In case of HIV-1 infection, it is recruited by the viral protein Tat. Regulates Tat's transactivating activity and may help inducing chromatin remodeling of proviral genes. This is Histone acetyltransferase KAT2A from Homo sapiens (Human).